Consider the following 433-residue polypeptide: GTPase Obg (433 aa).

Positions 2–160 constitute an Obg domain; it reads PTFVDQTKIE…RVLRLELKLL (159 aa). Residues 161-334 enclose the OBG-type G domain; the sequence is ADVGLVGFPS…LMNDTATLVE (174 aa). GTP contacts are provided by residues 167-174, 192-196, 214-217, 284-287, and 315-317; these read GFPSVGKS, FTTLT, DLPG, SQMD, and SSV. Residues Ser174 and Thr194 each coordinate Mg(2+). The 79-residue stretch at 355 to 433 folds into the OCT domain; the sequence is YKAPQRNEFM…IGKFVFEFVQ (79 aa).

This sequence belongs to the TRAFAC class OBG-HflX-like GTPase superfamily. OBG GTPase family. As to quaternary structure, monomer. Requires Mg(2+) as cofactor.

It is found in the cytoplasm. Its function is as follows. An essential GTPase which binds GTP, GDP and possibly (p)ppGpp with moderate affinity, with high nucleotide exchange rates and a fairly low GTP hydrolysis rate. Plays a role in control of the cell cycle, stress response, ribosome biogenesis and in those bacteria that undergo differentiation, in morphogenesis control. The protein is GTPase Obg of Lactobacillus acidophilus (strain ATCC 700396 / NCK56 / N2 / NCFM).